A 101-amino-acid chain; its full sequence is Small ribosomal subunit protein uS14 (101 aa).

It belongs to the universal ribosomal protein uS14 family. Part of the 30S ribosomal subunit. Contacts proteins S3 and S10.

Functionally, binds 16S rRNA, required for the assembly of 30S particles and may also be responsible for determining the conformation of the 16S rRNA at the A site. The sequence is that of Small ribosomal subunit protein uS14 from Baumannia cicadellinicola subsp. Homalodisca coagulata.